The chain runs to 162 residues: Dihydrofolate reductase (162 aa).

The DHFR domain maps to 3 to 161 (KITIIAACAE…VAYTFVHYLG (159 aa)). A substrate-binding site is contributed by 7–9 (IAA). Residues 8-9 (AA) and 16-21 (IGAGNA) contribute to the NADP(+) site. A substrate-binding site is contributed by Asp29. Residue 45–48 (GRKT) participates in NADP(+) binding. Position 60 (Arg60) interacts with substrate. Residues 65-68 (ISRQ) and 98-103 (MGGAQI) each bind NADP(+). Thr117 is a binding site for substrate.

The protein belongs to the dihydrofolate reductase family.

It catalyses the reaction (6S)-5,6,7,8-tetrahydrofolate + NADP(+) = 7,8-dihydrofolate + NADPH + H(+). Its pathway is cofactor biosynthesis; tetrahydrofolate biosynthesis; 5,6,7,8-tetrahydrofolate from 7,8-dihydrofolate: step 1/1. Its function is as follows. Key enzyme in folate metabolism. Catalyzes an essential reaction for de novo glycine and purine synthesis, and for DNA precursor synthesis. The polypeptide is Dihydrofolate reductase (folA) (Neisseria gonorrhoeae).